We begin with the raw amino-acid sequence, 274 residues long: MSLQNDIITALGVKSSIEPAQEIRVSVDFLKNYLNAHPFVTSLVLGISGGQDSTLTGKLCQTAITELRNETGNARYQFIAVRLPYGVQADEADCQDAIAFIQPDRVLTVNIKPAIEASEATLRAIGVELSDFVKGNEKARERMKAQYSIAGMNAGLVVGTDHAAEAVTGFFTKYGDGGTDINPIFRLNKRQGKALLRELGCPSHLYTKAPTADLEEDRPSLPDEVALGVTYEKIDDYLEGKQIEAKDAAIIENWYRKTEHKRRPPITVFDDFWR.

46–53 (GISGGQDS) lines the ATP pocket. Aspartate 52 serves as a coordination point for Mg(2+). Arginine 140 is a deamido-NAD(+) binding site. Threonine 160 contacts ATP. Position 165 (glutamate 165) interacts with Mg(2+). Residues lysine 173 and aspartate 180 each coordinate deamido-NAD(+). The ATP site is built by lysine 189 and threonine 211. 260–261 (HK) lines the deamido-NAD(+) pocket.

This sequence belongs to the NAD synthetase family. As to quaternary structure, homodimer.

The enzyme catalyses deamido-NAD(+) + NH4(+) + ATP = AMP + diphosphate + NAD(+) + H(+). The protein operates within cofactor biosynthesis; NAD(+) biosynthesis; NAD(+) from deamido-NAD(+) (ammonia route): step 1/1. Catalyzes the ATP-dependent amidation of deamido-NAD to form NAD. Uses ammonia as a nitrogen source. This Pectobacterium carotovorum subsp. carotovorum (strain PC1) protein is NH(3)-dependent NAD(+) synthetase.